Here is a 177-residue protein sequence, read N- to C-terminus: Anti-apoptotic protein NR13 (177 aa).

Residues 75–94 (LETDGGLNWGRLLALVVFAG) carry the BH1 motif. Residues 86–106 (LLALVVFAGTLAAALAESACE) traverse the membrane as a helical segment. The BH2 motif lies at 126–141 (EWMEEHGGWDGFCRFF). Residues 156 to 176 (SNAIMAAAGFGIAGLAFLLVV) traverse the membrane as a helical segment.

It belongs to the Bcl-2 family. As to quaternary structure, interacts with BAX. As to expression, mainly expressed in neural and muscular tissues.

It is found in the cell membrane. Functionally, shows anti-apoptotic properties. Counteract the pro-apoptotic activity of BAX. This is Anti-apoptotic protein NR13 (NR13) from Coturnix japonica (Japanese quail).